Here is a 359-residue protein sequence, read N- to C-terminus: Olfactory receptor 8S1 (359 aa).

The Extracellular portion of the chain corresponds to 1–25 (MALGNHSTITEFLLLGLSADPNIRA). N5 carries an N-linked (GlcNAc...) asparagine glycan. A helical membrane pass occupies residues 26–46 (LLFVLFLGIYLLTIMENLMLL). Residues 47–54 (LMIRADSC) are Cytoplasmic-facing. A helical membrane pass occupies residues 55-75 (LHKPMYFFLSHLSFVDLCFSS). Residues 76–99 (VIVPKMLENLLSQRKTISVEGCLA) lie on the Extracellular side of the membrane. C97 and C189 are joined by a disulfide. Residues 100–120 (QVFFVFVTAGTEACLLSGMAY) form a helical membrane-spanning segment. The Cytoplasmic portion of the chain corresponds to 121-139 (DRHAAICRPLLYGQIMGKQ). A helical transmembrane segment spans residues 140-160 (LYMHLVWGSWGLGFLDALINV). The Extracellular segment spans residues 161–197 (LLAVNMVFCEAKIIHHYSYEMPSLLPLSCSDISRSLI). Residues 198–217 (ALLCSTLLHGLGNFLLVFLS) traverse the membrane as a helical segment. The Cytoplasmic segment spans residues 218–237 (YTRIISTILSISSTSGRSKA). Residues 238–258 (FSTCSAHLTAVTLYYGSGLLR) form a helical membrane-spanning segment. Residues 259-269 (HLMPNSGSPIE) are Extracellular-facing. The helical transmembrane segment at 270–290 (LIFSVQYTVVTPMLNSLIYSL) threads the bilayer. Topologically, residues 291–359 (KNKEVKGERS…ALRAAPTALP (69 aa)) are cytoplasmic. The tract at residues 301 to 338 (LRDSSHLPQLHKGQARWKRPAFTEGRREPGHPELSIPV) is disordered.

The protein belongs to the G-protein coupled receptor 1 family.

It localises to the cell membrane. Odorant receptor. The polypeptide is Olfactory receptor 8S1 (OR8S1) (Homo sapiens (Human)).